A 468-amino-acid polypeptide reads, in one-letter code: MGVFGSNESSSMSIVMYPWLAFGHMTPFLHLSNKLAEKGHKIVFLLPKKALNQLEPLNLYPNLITFHTISIPQVKGLPPGAETNSDVPFFLTHLLAVAMDQTRPEVETIFRTIKPDLVFYDSAHWIPEIAKPIGAKTVCFNIVSAASIALSLVPSAEREVIDGKEMSGEELAKTPLGYPSSKVVLRPHEAKSLSFVWRKHEAIGSFFDGKVTAMRNCDAIAIRTCRETEGKFCDYISRQYSKPVYLTGPVLPGSQPNQPSLDPQWAEWLAKFNHGSVVFCAFGSQPVVNKIDQFQELCLGLESTGFPFLVAIKPPSGVSTVEEALPEGFKERVQGRGVVFGGWIQQPLVLNHPSVGCFVSHCGFGSMWESLMSDCQIVLVPQHGEQILNARLMTEEMEVAVEVEREKKGWFSRQSLENAVKSVMEEGSEIGEKVRKNHDKWRCVLTDSGFSDGYIDKFEQNLIELVKS.

UDP-alpha-D-xylose-binding positions include serine 284, 344 to 346 (IQQ), 361 to 369 (HCGFGSMWE), and 383 to 386 (HGEQ).

This sequence belongs to the UDP-glycosyltransferase family.

The catalysed reaction is an anthocyanidin 3-O-beta-D-glucoside + UDP-alpha-D-xylose = an anthocyanidin 3-O-beta-D-sambubioside + UDP + 2 H(+). Its pathway is secondary metabolite biosynthesis; flavonoid biosynthesis. Contributes to the last few anthocyanin biosynthetic steps. Converts cyanidin 3-O-glucoside to cyanidin 3-O-xylosyl(1-&gt;2)glucoside. Can use 3-O-glucosylated anthocyanidins/flavonols and uridine diphosphate (UDP)-xylose as substrates. The sequence is that of Anthocyanidin 3-O-glucoside 2'''-O-xylosyltransferase (A3G2XYLT) from Arabidopsis thaliana (Mouse-ear cress).